We begin with the raw amino-acid sequence, 146 residues long: uncharacterized protein (146 aa).

This is an uncharacterized protein from Orgyia pseudotsugata (Douglas-fir tussock moth).